A 308-amino-acid polypeptide reads, in one-letter code: Insoluble matrix shell protein 4 (308 aa).

Disordered regions lie at residues 1-21 (HGNG…GNGY), 47-104 (NTNS…PNAV), and 134-250 (YDSN…NTNS). Low complexity predominate over residues 47 to 99 (NTNSLNGNNNGNSNNNGNGNNNGNSNNNGNGNNNGNTNNGNSYDSNTNDDSNS).

Component of the acid-insoluble organic matrix of the calcified shell.

The protein resides in the secreted. This is Insoluble matrix shell protein 4 from Ruditapes philippinarum (Japanese carpet shell).